The following is a 211-amino-acid chain: Thiamine-phosphate synthase (211 aa).

Residues 37–41 and asparagine 69 each bind 4-amino-2-methyl-5-(diphosphooxymethyl)pyrimidine; that span reads QLRIK. 2 residues coordinate Mg(2+): aspartate 70 and aspartate 89. 4-amino-2-methyl-5-(diphosphooxymethyl)pyrimidine is bound at residue serine 108. 2-[(2R,5Z)-2-carboxy-4-methylthiazol-5(2H)-ylidene]ethyl phosphate is bound at residue 134 to 136; sequence TQT. Position 137 (lysine 137) interacts with 4-amino-2-methyl-5-(diphosphooxymethyl)pyrimidine. 2-[(2R,5Z)-2-carboxy-4-methylthiazol-5(2H)-ylidene]ethyl phosphate-binding positions include glycine 166 and 186–187; that span reads VS.

Belongs to the thiamine-phosphate synthase family. The cofactor is Mg(2+).

It catalyses the reaction 2-[(2R,5Z)-2-carboxy-4-methylthiazol-5(2H)-ylidene]ethyl phosphate + 4-amino-2-methyl-5-(diphosphooxymethyl)pyrimidine + 2 H(+) = thiamine phosphate + CO2 + diphosphate. The enzyme catalyses 2-(2-carboxy-4-methylthiazol-5-yl)ethyl phosphate + 4-amino-2-methyl-5-(diphosphooxymethyl)pyrimidine + 2 H(+) = thiamine phosphate + CO2 + diphosphate. It carries out the reaction 4-methyl-5-(2-phosphooxyethyl)-thiazole + 4-amino-2-methyl-5-(diphosphooxymethyl)pyrimidine + H(+) = thiamine phosphate + diphosphate. Its pathway is cofactor biosynthesis; thiamine diphosphate biosynthesis; thiamine phosphate from 4-amino-2-methyl-5-diphosphomethylpyrimidine and 4-methyl-5-(2-phosphoethyl)-thiazole: step 1/1. Its function is as follows. Condenses 4-methyl-5-(beta-hydroxyethyl)thiazole monophosphate (THZ-P) and 2-methyl-4-amino-5-hydroxymethyl pyrimidine pyrophosphate (HMP-PP) to form thiamine monophosphate (TMP). In Salmonella paratyphi A (strain ATCC 9150 / SARB42), this protein is Thiamine-phosphate synthase.